Reading from the N-terminus, the 418-residue chain is Glutamyl-tRNA reductase (418 aa).

Residues 49-52 (TCNR), serine 109, 114-116 (EPQ), and glutamine 120 each bind substrate. Catalysis depends on cysteine 50, which acts as the Nucleophile. Residue 189–194 (GAGETI) coordinates NADP(+).

The protein belongs to the glutamyl-tRNA reductase family. As to quaternary structure, homodimer.

The enzyme catalyses (S)-4-amino-5-oxopentanoate + tRNA(Glu) + NADP(+) = L-glutamyl-tRNA(Glu) + NADPH + H(+). It functions in the pathway porphyrin-containing compound metabolism; protoporphyrin-IX biosynthesis; 5-aminolevulinate from L-glutamyl-tRNA(Glu): step 1/2. Catalyzes the NADPH-dependent reduction of glutamyl-tRNA(Glu) to glutamate 1-semialdehyde (GSA). The sequence is that of Glutamyl-tRNA reductase from Escherichia coli O1:K1 / APEC.